A 240-amino-acid chain; its full sequence is NAD(P)H-hydrate epimerase (240 aa).

The YjeF N-terminal domain occupies 15–224 (AQEIDAELMG…SYNLKLPCYP (210 aa)). 66 to 70 (NQGGD) serves as a coordination point for (6S)-NADPHX. K(+) contacts are provided by Gln67 and Asp129. (6S)-NADPHX contacts are provided by residues 133–139 (GFSFHSE) and Asp162. Ser165 contributes to the K(+) binding site.

The protein belongs to the NnrE/AIBP family. K(+) is required as a cofactor.

The protein localises to the cytoplasm. The protein resides in the mitochondrion. It catalyses the reaction (6R)-NADHX = (6S)-NADHX. The catalysed reaction is (6R)-NADPHX = (6S)-NADPHX. Functionally, catalyzes the epimerization of the S- and R-forms of NAD(P)HX, a damaged form of NAD(P)H that is a result of enzymatic or heat-dependent hydration. This is a prerequisite for the S-specific NAD(P)H-hydrate dehydratase to allow the repair of both epimers of NAD(P)HX. The sequence is that of NAD(P)H-hydrate epimerase from Puccinia graminis f. sp. tritici (strain CRL 75-36-700-3 / race SCCL) (Black stem rust fungus).